The sequence spans 158 residues: 6,7-dimethyl-8-ribityllumazine synthase (158 aa).

5-amino-6-(D-ribitylamino)uracil-binding positions include Trp-27, 58 to 60, and 81 to 83; these read SFE and VII. 86-87 is a (2S)-2-hydroxy-3-oxobutyl phosphate binding site; that stretch reads GT. The active-site Proton donor is His-89. Phe-114 contacts 5-amino-6-(D-ribitylamino)uracil. Arg-128 provides a ligand contact to (2S)-2-hydroxy-3-oxobutyl phosphate.

Belongs to the DMRL synthase family.

It carries out the reaction (2S)-2-hydroxy-3-oxobutyl phosphate + 5-amino-6-(D-ribitylamino)uracil = 6,7-dimethyl-8-(1-D-ribityl)lumazine + phosphate + 2 H2O + H(+). The protein operates within cofactor biosynthesis; riboflavin biosynthesis; riboflavin from 2-hydroxy-3-oxobutyl phosphate and 5-amino-6-(D-ribitylamino)uracil: step 1/2. Its function is as follows. Catalyzes the formation of 6,7-dimethyl-8-ribityllumazine by condensation of 5-amino-6-(D-ribitylamino)uracil with 3,4-dihydroxy-2-butanone 4-phosphate. This is the penultimate step in the biosynthesis of riboflavin. The polypeptide is 6,7-dimethyl-8-ribityllumazine synthase (Leifsonia xyli subsp. xyli (strain CTCB07)).